Consider the following 94-residue polypeptide: Co-chaperonin GroES (94 aa).

The protein belongs to the GroES chaperonin family. As to quaternary structure, heptamer of 7 subunits arranged in a ring. Interacts with the chaperonin GroEL.

The protein localises to the cytoplasm. Its function is as follows. Together with the chaperonin GroEL, plays an essential role in assisting protein folding. The GroEL-GroES system forms a nano-cage that allows encapsulation of the non-native substrate proteins and provides a physical environment optimized to promote and accelerate protein folding. GroES binds to the apical surface of the GroEL ring, thereby capping the opening of the GroEL channel. The protein is Co-chaperonin GroES of Lactobacillus acidophilus (strain ATCC 700396 / NCK56 / N2 / NCFM).